Consider the following 266-residue polypeptide: Undecaprenyl-diphosphatase 1 (266 aa).

A run of 8 helical transmembrane segments spans residues Met1 to Ile21, Gln39 to Phe59, Trp87 to Ile107, Thr114 to Met134, Ala149 to Ala169, Ala183 to Val203, Ala218 to Leu238, and Met246 to Leu266.

It belongs to the UppP family.

The protein resides in the cell inner membrane. It carries out the reaction di-trans,octa-cis-undecaprenyl diphosphate + H2O = di-trans,octa-cis-undecaprenyl phosphate + phosphate + H(+). Functionally, catalyzes the dephosphorylation of undecaprenyl diphosphate (UPP). Confers resistance to bacitracin. The polypeptide is Undecaprenyl-diphosphatase 1 (Shewanella oneidensis (strain ATCC 700550 / JCM 31522 / CIP 106686 / LMG 19005 / NCIMB 14063 / MR-1)).